The primary structure comprises 131 residues: Large ribosomal subunit protein bL17 (131 aa).

The protein belongs to the bacterial ribosomal protein bL17 family. As to quaternary structure, part of the 50S ribosomal subunit. Contacts protein L32.

The protein is Large ribosomal subunit protein bL17 of Burkholderia multivorans (strain ATCC 17616 / 249).